Consider the following 284-residue polypeptide: Formamidopyrimidine-DNA glycosylase (284 aa).

Catalysis depends on P2, which acts as the Schiff-base intermediate with DNA. E3 (proton donor) is an active-site residue. K60 serves as the catalytic Proton donor; for beta-elimination activity. H99, R118, and R163 together coordinate DNA. The segment at 248 to 282 (WVYGRQGQPCRTCGQTIERIKLVGRSTHFCPQCQP) adopts an FPG-type zinc-finger fold. The Proton donor; for delta-elimination activity role is filled by R272.

The protein belongs to the FPG family. As to quaternary structure, monomer. The cofactor is Zn(2+).

It carries out the reaction Hydrolysis of DNA containing ring-opened 7-methylguanine residues, releasing 2,6-diamino-4-hydroxy-5-(N-methyl)formamidopyrimidine.. It catalyses the reaction 2'-deoxyribonucleotide-(2'-deoxyribose 5'-phosphate)-2'-deoxyribonucleotide-DNA = a 3'-end 2'-deoxyribonucleotide-(2,3-dehydro-2,3-deoxyribose 5'-phosphate)-DNA + a 5'-end 5'-phospho-2'-deoxyribonucleoside-DNA + H(+). Involved in base excision repair of DNA damaged by oxidation or by mutagenic agents. Acts as a DNA glycosylase that recognizes and removes damaged bases. Has a preference for oxidized purines, such as 7,8-dihydro-8-oxoguanine (8-oxoG). Has AP (apurinic/apyrimidinic) lyase activity and introduces nicks in the DNA strand. Cleaves the DNA backbone by beta-delta elimination to generate a single-strand break at the site of the removed base with both 3'- and 5'-phosphates. In Acaryochloris marina (strain MBIC 11017), this protein is Formamidopyrimidine-DNA glycosylase.